We begin with the raw amino-acid sequence, 60 residues long: uncharacterized protein (60 aa).

The tract at residues 27 to 50 (VKNNNNNNNNNNNNNNNNNNNNNK) is disordered. A compositionally biased stretch (low complexity) spans 29–49 (NNNNNNNNNNNNNNNNNNNNN).

This is an uncharacterized protein from Dictyostelium discoideum (Social amoeba).